The primary structure comprises 302 residues: Mediator of RNA polymerase II transcription subunit 4 (302 aa).

A coiled-coil region spans residues 98–145 (QLHANVEKIIAINDDLKSKIEELDRHRRLGENIKELEAESSNLDNTSK). Residues 239–302 (GTTEEEKIQE…LFDSEDEFSD (64 aa)) are disordered. The segment covering 242–265 (EEEKIQEKKDEQVKKADKQQDTGI) has biased composition (basic and acidic residues). The span at 268-278 (GSFGDYGSSSS) shows a compositional bias: low complexity. A compositionally biased stretch (acidic residues) spans 292-302 (DLFDSEDEFSD).

It belongs to the Mediator complex subunit 4 family. As to quaternary structure, component of the Mediator complex.

The protein resides in the nucleus. Component of the Mediator complex, a coactivator involved in the regulated transcription of nearly all RNA polymerase II-dependent genes. Mediator functions as a bridge to convey information from gene-specific regulatory proteins to the basal RNA polymerase II transcription machinery. Mediator is recruited to promoters by direct interactions with regulatory proteins and serves as a scaffold for the assembly of a functional preinitiation complex with RNA polymerase II and the general transcription factors. The protein is Mediator of RNA polymerase II transcription subunit 4 (MED4) of Scheffersomyces stipitis (strain ATCC 58785 / CBS 6054 / NBRC 10063 / NRRL Y-11545) (Yeast).